Consider the following 237-residue polypeptide: Probable F-box protein At1g53815 (237 aa).

In terms of domain architecture, F-box spans 41 to 72 (ISNILSRLPLKSKAKCRCVSKLWSSIIRRPNY).

The chain is Probable F-box protein At1g53815 from Arabidopsis thaliana (Mouse-ear cress).